Here is a 311-residue protein sequence, read N- to C-terminus: 4-hydroxy-3-methylbut-2-enyl diphosphate reductase (311 aa).

[4Fe-4S] cluster is bound at residue cysteine 12. Residues histidine 41 and histidine 74 each contribute to the (2E)-4-hydroxy-3-methylbut-2-enyl diphosphate site. Histidine 41 and histidine 74 together coordinate dimethylallyl diphosphate. Histidine 41 and histidine 74 together coordinate isopentenyl diphosphate. Position 96 (cysteine 96) interacts with [4Fe-4S] cluster. Histidine 124 is a (2E)-4-hydroxy-3-methylbut-2-enyl diphosphate binding site. Residue histidine 124 coordinates dimethylallyl diphosphate. Histidine 124 contacts isopentenyl diphosphate. Glutamate 126 serves as the catalytic Proton donor. Threonine 167 contacts (2E)-4-hydroxy-3-methylbut-2-enyl diphosphate. Cysteine 197 serves as a coordination point for [4Fe-4S] cluster. (2E)-4-hydroxy-3-methylbut-2-enyl diphosphate-binding residues include serine 225, serine 226, asparagine 227, and serine 269. Residues serine 225, serine 226, asparagine 227, and serine 269 each contribute to the dimethylallyl diphosphate site. Residues serine 225, serine 226, asparagine 227, and serine 269 each contribute to the isopentenyl diphosphate site.

The protein belongs to the IspH family. [4Fe-4S] cluster is required as a cofactor.

The catalysed reaction is isopentenyl diphosphate + 2 oxidized [2Fe-2S]-[ferredoxin] + H2O = (2E)-4-hydroxy-3-methylbut-2-enyl diphosphate + 2 reduced [2Fe-2S]-[ferredoxin] + 2 H(+). It carries out the reaction dimethylallyl diphosphate + 2 oxidized [2Fe-2S]-[ferredoxin] + H2O = (2E)-4-hydroxy-3-methylbut-2-enyl diphosphate + 2 reduced [2Fe-2S]-[ferredoxin] + 2 H(+). It participates in isoprenoid biosynthesis; dimethylallyl diphosphate biosynthesis; dimethylallyl diphosphate from (2E)-4-hydroxy-3-methylbutenyl diphosphate: step 1/1. Its pathway is isoprenoid biosynthesis; isopentenyl diphosphate biosynthesis via DXP pathway; isopentenyl diphosphate from 1-deoxy-D-xylulose 5-phosphate: step 6/6. Functionally, catalyzes the conversion of 1-hydroxy-2-methyl-2-(E)-butenyl 4-diphosphate (HMBPP) into a mixture of isopentenyl diphosphate (IPP) and dimethylallyl diphosphate (DMAPP). Acts in the terminal step of the DOXP/MEP pathway for isoprenoid precursor biosynthesis. In Aeromonas hydrophila subsp. hydrophila (strain ATCC 7966 / DSM 30187 / BCRC 13018 / CCUG 14551 / JCM 1027 / KCTC 2358 / NCIMB 9240 / NCTC 8049), this protein is 4-hydroxy-3-methylbut-2-enyl diphosphate reductase.